The chain runs to 1876 residues: 1,3-beta-glucan synthase component FKS1 (1876 aa).

Composition is skewed to polar residues over residues 1–25 and 60–71; these read MNTD…QSQE and QPPNESYDQDYT. Residues 1–108 are disordered; it reads MNTDQQPYQG…PGTPGYDSYG (108 aa). Residues 1 to 454 lie on the Cytoplasmic side of the membrane; that stretch reads MNTDQQPYQG…WLHLVTNFNR (454 aa). Lys-259 is covalently cross-linked (Glycyl lysine isopeptide (Lys-Gly) (interchain with G-Cter in ubiquitin)). Phosphothreonine occurs at positions 269 and 272. Residues Lys-275 and Lys-386 each participate in a glycyl lysine isopeptide (Lys-Gly) (interchain with G-Cter in ubiquitin) cross-link. Residues 455-475 form a helical membrane-spanning segment; sequence IWVMHISIFWMYFAYNSPTFY. Residues 476 to 492 are Extracellular-facing; that stretch reads THNYQQLVDNQPLAAYK. The chain crosses the membrane as a helical span at residues 493–513; the sequence is WASCALGGTVASLIQIVATLC. Residues 514–531 are Cytoplasmic-facing; the sequence is EWSFVPRKWAGAQHLSRR. A helical transmembrane segment spans residues 532 to 552; the sequence is FWFLCIIFGINLGPIIFVFAY. Topologically, residues 553–563 are extracellular; the sequence is DKDTVYSTAAH. A helical membrane pass occupies residues 564–584; that stretch reads VVAAVMFFVAVATIIFFSIMP. Residues 585 to 621 are Cytoplasmic-facing; it reads LGGLFTSYMKKSTRRYVASQTFTAAFAPLHGLDRWMS. A helical membrane pass occupies residues 622-642; the sequence is YLVWVTVFAAKYSESYYFLVL. Residues 643–678 are Extracellular-facing; that stretch reads SLRDPIRILSTTAMRCTGEYWWGAVLCKVQPKIVLG. Residues 679 to 699 traverse the membrane as a helical segment; sequence LVIATDFILFFLDTYLWYIIV. The Cytoplasmic segment spans residues 700 to 1358; the sequence is NTIFSVGKSF…QPAVDWVRRY (659 aa). Glycyl lysine isopeptide (Lys-Gly) (interchain with G-Cter in ubiquitin) cross-links involve residues Lys-910 and Lys-915. A helical transmembrane segment spans residues 1359–1379; the sequence is TLSIFIVFWIAFVPIVVQELI. Over 1380–1444 the chain is Extracellular; the sequence is ERGLWKATQR…RIPFSILYSR (65 aa). The helical transmembrane segment at 1445–1465 threads the bilayer; it reads FAGSAIYMGARSMLMLLFGTV. The Cytoplasmic portion of the chain corresponds to 1466–1469; sequence AHWQ. Residues 1470–1490 form a helical membrane-spanning segment; that stretch reads APLLWFWASLSSLIFAPFVFN. Over 1491–1560 the chain is Extracellular; sequence PHQFAWEDFF…DASRAHRTNL (70 aa). Residues Lys-1539 and Lys-1547 each participate in a glycyl lysine isopeptide (Lys-Gly) (interchain with G-Cter in ubiquitin) cross-link. Residues 1561–1581 traverse the membrane as a helical segment; that stretch reads IMAEIIPCAIYAAGCFIAFTF. Topologically, residues 1582–1601 are cytoplasmic; it reads INAQTGVKTTDDDRVNSVLR. A helical membrane pass occupies residues 1602 to 1622; the sequence is IIICTLAPIAVNLGVLFFCMG. Topologically, residues 1623–1643 are extracellular; it reads MSCCSGPLFGMCCKKTGSVMA. A helical membrane pass occupies residues 1644 to 1664; it reads GIAHGVAVIVHIAFFIVMWVL. Residues 1665–1672 lie on the Cytoplasmic side of the membrane; that stretch reads ESFNFVRM. The chain crosses the membrane as a helical span at residues 1673-1695; sequence LIGVVTCIQCQRLIFHCMTALML. Over 1696–1802 the chain is Extracellular; the sequence is TREFKNDHAN…RKRMVKKYCS (107 aa). The chain crosses the membrane as a helical span at residues 1803-1823; sequence LYFLVLAIFAGCIIGPAVASA. At 1824–1876 the chain is on the cytoplasmic side; that stretch reads KIHKHIGDSLDGVVHNLFQPINTTNNDTGSQMSTYQSHYYTHTPSLKTWSTIK.

This sequence belongs to the glycosyltransferase 48 family. As to quaternary structure, component of the 1,3-beta-glucan synthase (GS) complex, composed of two alternate catalytic subunits FKS1 or GSC2, and a regulatory subunit RHO1. Interacts with RHO1, which is a GTP-binding protein.

Its subcellular location is the mitochondrion. The protein resides in the cell membrane. The enzyme catalyses [(1-&gt;3)-beta-D-glucosyl](n) + UDP-alpha-D-glucose = [(1-&gt;3)-beta-D-glucosyl](n+1) + UDP + H(+). Its function is as follows. Alternate catalytic subunit of the 1,3-beta-glucan synthase (GS) complex. Synthesizes 1,3-beta-glucan, a major structural component of the yeast cell wall. Involved in cell wall synthesis, maintenance and remodeling. This Saccharomyces cerevisiae (strain ATCC 204508 / S288c) (Baker's yeast) protein is 1,3-beta-glucan synthase component FKS1 (FKS1).